A 372-amino-acid polypeptide reads, in one-letter code: Serine proteinase inhibitor 1 (372 aa).

The protein belongs to the serpin family. Poxviruses subfamily.

The protein localises to the host cytoplasm. Its function is as follows. Plays a role in mediating viral host range. May act to inhibit a caspase independent form of apoptosis to allow efficient virus replication in infected cells. This is Serine proteinase inhibitor 1 (OPG208) from Homo sapiens (Human).